A 429-amino-acid chain; its full sequence is UDP-N-acetylglucosamine 1-carboxyvinyltransferase (429 aa).

22–23 contacts phosphoenolpyruvate; it reads KN. Arg93 is a binding site for UDP-N-acetyl-alpha-D-glucosamine. Cys117 acts as the Proton donor in catalysis. The residue at position 117 (Cys117) is a 2-(S-cysteinyl)pyruvic acid O-phosphothioketal. Residues 122 to 126, Asp313, and Ile335 each bind UDP-N-acetyl-alpha-D-glucosamine; that span reads RPVDQ.

Belongs to the EPSP synthase family. MurA subfamily.

It is found in the cytoplasm. It carries out the reaction phosphoenolpyruvate + UDP-N-acetyl-alpha-D-glucosamine = UDP-N-acetyl-3-O-(1-carboxyvinyl)-alpha-D-glucosamine + phosphate. The protein operates within cell wall biogenesis; peptidoglycan biosynthesis. Cell wall formation. Adds enolpyruvyl to UDP-N-acetylglucosamine. The protein is UDP-N-acetylglucosamine 1-carboxyvinyltransferase of Variovorax paradoxus (strain S110).